A 387-amino-acid chain; its full sequence is MKRITILGSTGSIGTNSLEVISRFPEQFCATYLSAGSNVKLLAEQAKRFRPKGVVIMNESLEGELRSLLAGESIEIMSGEEGLCEISRRSDTDFVIGSVVGFAGLKPTVEALKAGKDVGLANKETLVVGGEIITSLVEEHGCKMLPVDSEHSAIFQCLVGEAPEFVGKIILTASGGPFRTWEKSRFEQITVADALNHPNWKMGSKITIDSATMMNKGLEVIEAKWLFNLDYDRIDVVVHPQSIVHSMVEFKDGSVKAQLGVPDMKIPIQYALTYPERFYADYERLDWRNISKLDFETPDTEKFRCLALAYEAGRKGGSYPAVLNAANEVAVELFLKEKISFLNISELIDDAMQAHDGRAASSIDDLIDIDAQTRRYVYDKADAMHAV.

7 residues coordinate NADPH: threonine 10, glycine 11, serine 12, isoleucine 13, glycine 36, asparagine 38, and asparagine 122. Lysine 123 provides a ligand contact to 1-deoxy-D-xylulose 5-phosphate. Residue glutamate 124 participates in NADPH binding. Aspartate 148 contacts Mn(2+). Serine 149, glutamate 150, serine 174, and histidine 197 together coordinate 1-deoxy-D-xylulose 5-phosphate. Glutamate 150 contributes to the Mn(2+) binding site. An NADPH-binding site is contributed by glycine 203. Residues serine 210, asparagine 215, lysine 216, and glutamate 219 each contribute to the 1-deoxy-D-xylulose 5-phosphate site. Position 219 (glutamate 219) interacts with Mn(2+).

It belongs to the DXR family. It depends on Mg(2+) as a cofactor. The cofactor is Mn(2+).

The catalysed reaction is 2-C-methyl-D-erythritol 4-phosphate + NADP(+) = 1-deoxy-D-xylulose 5-phosphate + NADPH + H(+). Its pathway is isoprenoid biosynthesis; isopentenyl diphosphate biosynthesis via DXP pathway; isopentenyl diphosphate from 1-deoxy-D-xylulose 5-phosphate: step 1/6. Catalyzes the NADPH-dependent rearrangement and reduction of 1-deoxy-D-xylulose-5-phosphate (DXP) to 2-C-methyl-D-erythritol 4-phosphate (MEP). The sequence is that of 1-deoxy-D-xylulose 5-phosphate reductoisomerase from Chloroherpeton thalassium (strain ATCC 35110 / GB-78).